A 138-amino-acid chain; its full sequence is Putative pre-16S rRNA nuclease (138 aa).

This sequence belongs to the YqgF nuclease family.

The protein resides in the cytoplasm. Functionally, could be a nuclease involved in processing of the 5'-end of pre-16S rRNA. The polypeptide is Putative pre-16S rRNA nuclease (Flavobacterium johnsoniae (strain ATCC 17061 / DSM 2064 / JCM 8514 / BCRC 14874 / CCUG 350202 / NBRC 14942 / NCIMB 11054 / UW101) (Cytophaga johnsonae)).